Reading from the N-terminus, the 1085-residue chain is Carbamoyl phosphate synthase large chain (1085 aa).

The segment at 1 to 399 (MPKRTDISNI…ALQKALCSLE (399 aa)) is carboxyphosphate synthetic domain. R127, R167, G174, E206, L208, E213, G239, V240, H241, Q283, and E297 together coordinate ATP. Residues 131-326 (KEAMLKIGMD…IAKVATMLAV (196 aa)) enclose the ATP-grasp 1 domain. Mg(2+) contacts are provided by Q283, E297, and N299. 3 residues coordinate Mn(2+): Q283, E297, and N299. Positions 400–552 (NNWLGFESLS…APNPLPPIEN (153 aa)) are oligomerization domain. Residues 553–951 (KQEKKEKKIL…AFFKAQTACF (399 aa)) are carbamoyl phosphate synthetic domain. Residues 678–871 (SLFLKELDIK…LAKVATRVMV (194 aa)) enclose the ATP-grasp 2 domain. ATP is bound by residues R714, K756, L758, E763, G788, I789, H790, S791, Q830, and E842. Mg(2+)-binding residues include Q830, E842, and N844. The Mn(2+) site is built by Q830, E842, and N844. Residues 952–1085 (NPIKNKGLIF…ELLALQDYLK (134 aa)) enclose the MGS-like domain. The allosteric domain stretch occupies residues 952 to 1085 (NPIKNKGLIF…ELLALQDYLK (134 aa)).

The protein belongs to the CarB family. As to quaternary structure, composed of two chains; the small (or glutamine) chain promotes the hydrolysis of glutamine to ammonia, which is used by the large (or ammonia) chain to synthesize carbamoyl phosphate. Tetramer of heterodimers (alpha,beta)4. The cofactor is Mg(2+). Mn(2+) is required as a cofactor.

The enzyme catalyses hydrogencarbonate + L-glutamine + 2 ATP + H2O = carbamoyl phosphate + L-glutamate + 2 ADP + phosphate + 2 H(+). It carries out the reaction hydrogencarbonate + NH4(+) + 2 ATP = carbamoyl phosphate + 2 ADP + phosphate + 2 H(+). The protein operates within amino-acid biosynthesis; L-arginine biosynthesis; carbamoyl phosphate from bicarbonate: step 1/1. It participates in pyrimidine metabolism; UMP biosynthesis via de novo pathway; (S)-dihydroorotate from bicarbonate: step 1/3. In terms of biological role, large subunit of the glutamine-dependent carbamoyl phosphate synthetase (CPSase). CPSase catalyzes the formation of carbamoyl phosphate from the ammonia moiety of glutamine, carbonate, and phosphate donated by ATP, constituting the first step of 2 biosynthetic pathways, one leading to arginine and/or urea and the other to pyrimidine nucleotides. The large subunit (synthetase) binds the substrates ammonia (free or transferred from glutamine from the small subunit), hydrogencarbonate and ATP and carries out an ATP-coupled ligase reaction, activating hydrogencarbonate by forming carboxy phosphate which reacts with ammonia to form carbamoyl phosphate. The protein is Carbamoyl phosphate synthase large chain of Helicobacter pylori (strain ATCC 700392 / 26695) (Campylobacter pylori).